The sequence spans 1222 residues: Protein SCP160 (1222 aa).

Residues 1 to 12 are compositionally biased toward polar residues; it reads MSEEQTAIDSPP. The interval 1–59 is disordered; the sequence is MSEEQTAIDSPPSTVEGSVETVTTIDSPSTTASTIAATAEEHPQLEKKPTPLPSLKDLP. Residues 13–38 are compositionally biased toward low complexity; that stretch reads STVEGSVETVTTIDSPSTTASTIAAT. Residues 39 to 49 show a composition bias toward basic and acidic residues; sequence AEEHPQLEKKP. Thr-50 carries the phosphothreonine modification. Ser-54, Ser-63, Ser-85, Ser-87, and Ser-89 each carry phosphoserine. The disordered stretch occupies residues 79-98; that stretch reads KPAVSNSPSPSPSAPSLTTG. In terms of domain architecture, KH 1 spans 177 to 249; that stretch reads PINAVIEVPS…ESVNLAKAKI (73 aa). Phosphoserine is present on Ser-630. KH domains lie at 634–702, 712–771, 782–851, 861–929, and 939–1001; these read KSKM…KKYL, IITK…HEEL, GHKM…AKRV, FVTE…VEEI, and SVTK…EKKI. Ser-1112 is subject to Phosphoserine. In terms of domain architecture, KH 7 spans 1153–1216; the sequence is YAGYVWGADT…AGVEKAGEMV (64 aa).

The protein localises to the endoplasmic reticulum membrane. The protein resides in the nucleus membrane. Its function is as follows. Involved in the control of mitotic chromosome transmission. Required during cell division for faithful partitioning of the ER-nuclear envelope membranes which, in S.cerevisiae, enclose the duplicated chromosomes. In Saccharomyces cerevisiae (strain ATCC 204508 / S288c) (Baker's yeast), this protein is Protein SCP160 (SCP160).